Reading from the N-terminus, the 537-residue chain is ATP synthase subunit beta (537 aa).

A disordered region spans residues 1–61 (MAKAATSKKE…SSPQKGGKKG (61 aa)). The span at 7–18 (SKKEASKVEAKK) shows a compositional bias: basic and acidic residues. Over residues 44 to 55 (NSPSRTGSSSPQ) the composition is skewed to polar residues. 209 to 216 (GGAGVGKT) serves as a coordination point for ATP.

Belongs to the ATPase alpha/beta chains family. F-type ATPases have 2 components, CF(1) - the catalytic core - and CF(0) - the membrane proton channel. CF(1) has five subunits: alpha(3), beta(3), gamma(1), delta(1), epsilon(1). CF(0) has three main subunits: a(1), b(2) and c(9-12). The alpha and beta chains form an alternating ring which encloses part of the gamma chain. CF(1) is attached to CF(0) by a central stalk formed by the gamma and epsilon chains, while a peripheral stalk is formed by the delta and b chains.

Its subcellular location is the cell inner membrane. It carries out the reaction ATP + H2O + 4 H(+)(in) = ADP + phosphate + 5 H(+)(out). In terms of biological role, produces ATP from ADP in the presence of a proton gradient across the membrane. The catalytic sites are hosted primarily by the beta subunits. The sequence is that of ATP synthase subunit beta from Bartonella bacilliformis (strain ATCC 35685 / KC583 / Herrer 020/F12,63).